A 136-amino-acid chain; its full sequence is uncharacterized protein (136 aa).

Positions 1–100 (MQSREPSGWR…PCSGGPDRPE (100 aa)) are disordered. A compositionally biased stretch (basic residues) spans 66-75 (RLLRWHHRVP).

This is an uncharacterized protein from Homo sapiens (Human).